Reading from the N-terminus, the 288-residue chain is Light-independent protochlorophyllide reductase iron-sulfur ATP-binding protein (288 aa).

ATP contacts are provided by residues 12 to 17 and K41; that span reads GIGKST. S16 lines the Mg(2+) pocket. [4Fe-4S] cluster is bound by residues C97 and C131. 182–183 lines the ATP pocket; it reads NR.

This sequence belongs to the NifH/BchL/ChlL family. In terms of assembly, homodimer. Protochlorophyllide reductase is composed of three subunits; ChlL, ChlN and ChlB. Requires [4Fe-4S] cluster as cofactor.

It carries out the reaction chlorophyllide a + oxidized 2[4Fe-4S]-[ferredoxin] + 2 ADP + 2 phosphate = protochlorophyllide a + reduced 2[4Fe-4S]-[ferredoxin] + 2 ATP + 2 H2O. It functions in the pathway porphyrin-containing compound metabolism; chlorophyll biosynthesis (light-independent). In terms of biological role, component of the dark-operative protochlorophyllide reductase (DPOR) that uses Mg-ATP and reduced ferredoxin to reduce ring D of protochlorophyllide (Pchlide) to form chlorophyllide a (Chlide). This reaction is light-independent. The L component serves as a unique electron donor to the NB-component of the complex, and binds Mg-ATP. The sequence is that of Light-independent protochlorophyllide reductase iron-sulfur ATP-binding protein from Picosynechococcus sp. (strain ATCC 27264 / PCC 7002 / PR-6) (Agmenellum quadruplicatum).